Consider the following 908-residue polypeptide: Flap endonuclease GEN homolog 1 (908 aa).

Residues 2–96 (GVNDLWQILE…SKRNQSRYGS (95 aa)) are XPG-N domain. Residues aspartate 30, glutamate 75, glutamate 134, glutamate 136, aspartate 155, aspartate 157, and aspartate 208 each coordinate Mg(2+). The tract at residues 122–208 (ECLGIPWVQA…VGLAILLGCD (87 aa)) is XPG-I domain. The segment at 208-384 (DYLPKGVPGV…LLVLLTHYDM (177 aa)) is 5'-3' exonuclease domain. The chromodomain stretch occupies residues 390–464 (GSRNSNQLQP…VYQKQKLEIK (75 aa)). Phosphoserine is present on residues serine 801 and serine 802.

This sequence belongs to the XPG/RAD2 endonuclease family. GEN subfamily. In terms of assembly, largely monomeric, dimerizes on the Holliday junction and the first nick occurs upon dimerization at the junction. Mg(2+) is required as a cofactor.

It localises to the nucleus. Its function is as follows. Endonuclease which resolves Holliday junctions (HJs) by the introduction of symmetrically related cuts across the junction point, to produce nicked duplex products in which the nicks can be readily ligated. Four-way DNA intermediates, also known as Holliday junctions, are formed during homologous recombination and DNA repair, and their resolution is necessary for proper chromosome segregation. Cleaves HJs by a nick and counter-nick mechanism involving dual coordinated incisions that lead to the formation of ligatable nicked duplex products. Cleavage of the first strand is rate limiting, while second strand cleavage is rapid. Largely monomeric, dimerizes on the HJ and the first nick occurs upon dimerization at the junction. Efficiently cleaves both single and double HJs contained within large recombination intermediates. Exhibits a weak sequence preference for incision between two G residues that reside in a T-rich region of DNA. Also has endonuclease activity on 5'-flap and replication fork (RF) DNA substrates. This Homo sapiens (Human) protein is Flap endonuclease GEN homolog 1 (GEN1).